Here is an 87-residue protein sequence, read N- to C-terminus: Small ribosomal subunit protein bS20 (87 aa).

The tract at residues 1-20 (MANHKSAEKRARQTIKKTER) is disordered.

This sequence belongs to the bacterial ribosomal protein bS20 family.

In terms of biological role, binds directly to 16S ribosomal RNA. The chain is Small ribosomal subunit protein bS20 from Campylobacter jejuni subsp. jejuni serotype O:2 (strain ATCC 700819 / NCTC 11168).